Consider the following 300-residue polypeptide: Iron/alpha-ketoglutarate-dependent dioxygenase okaE (300 aa).

Residues His-134, Asp-136, and His-210 each coordinate Fe cation.

This sequence belongs to the PhyH family. Homodimer. Fe cation is required as a cofactor.

It catalyses the reaction okaramine A + 2-oxoglutarate + AH2 + O2 = 12-deshydroxyl okaramine E + succinate + A + CO2 + H2O. The catalysed reaction is 12-deshydroxyl okaramine E + 2-oxoglutarate + O2 = okaramine E + succinate + CO2. The enzyme catalyses okaramine A + 2-oxoglutarate + O2 = okaramine E + succinate + CO2. It functions in the pathway alkaloid biosynthesis. It participates in secondary metabolite biosynthesis; terpenoid biosynthesis. Iron/alpha-ketoglutarate-dependent dioxygenase; part of the gene cluster that mediates the biosynthesis of okaramine B, a prenylated indole alkaloid that possesses an unusual octacyclic ring system, including a four-membered azetidine ring and an eight-membered azocine ring, and that exhibits insecticidal activity against silkworm larvae. Within the pathway, okaE forms the unusual 2-dimethyl-3-methyl-azetidine ring to yield 12-deshydroxyl okaramine E from okaramine A. OkaE also catalyzes the hydroxylation of 12-deshydroxyl okaramine E to produce okaramine E. The biosynthesis begins with the NRPS okaA that condenses two tryptophan molecules into cyclo(L-Trp-L-Trp). Prenylation by the prenyltransferase okaC then leads to the formation of cyclo(N8-(alpha,alpha-dimethylallyl)-L-Trp-6a-(alpha,alpha-dime-thylallyl)-L-Trp). This is followed by indole 2,3-epoxidation by the FAD-dependent monooxygenase okaB to facilitate the formation of the hexahydropyrrolo[2,3-b]indole (HPI) moiety of okaramine C. The cytochrome P450 monooxygenase okaD then likely catalyzes formation of the eight-membered ring of okaramine A. The dioxygenase okaE further forms the unusual 2-dimethyl-3-methyl-azetidine ring to yield 12-deshydroxyl okaramine E, as well as the hydroxylation of 12-deshydroxyl okaramine E to produce okaramine E. The cytochrome P450 monoxygenase okaG converts 12-deshydroxyl okaramine E into 3-desmethyl okaramine B which is further methylated by the methyltransferase okaF into okaramine B. In a shunt pathway, okaG and okaF together are also able to convert okaramine E into okaramine D. Okaramine H is produced by nonenzymatic conversion from okaramine A. The polypeptide is Iron/alpha-ketoglutarate-dependent dioxygenase okaE (Penicillium ochrochloron).